A 214-amino-acid chain; its full sequence is Probable nicotinate-nucleotide adenylyltransferase (214 aa).

The protein belongs to the NadD family.

It catalyses the reaction nicotinate beta-D-ribonucleotide + ATP + H(+) = deamido-NAD(+) + diphosphate. It participates in cofactor biosynthesis; NAD(+) biosynthesis; deamido-NAD(+) from nicotinate D-ribonucleotide: step 1/1. In terms of biological role, catalyzes the reversible adenylation of nicotinate mononucleotide (NaMN) to nicotinic acid adenine dinucleotide (NaAD). The protein is Probable nicotinate-nucleotide adenylyltransferase of Mycobacterium tuberculosis (strain ATCC 25177 / H37Ra).